Consider the following 490-residue polypeptide: Betaine aldehyde dehydrogenase (490 aa).

NAD(+) is bound by residues K174, E177, and 227-232 (GGIETG). Residues E249 and C283 contribute to the active site. E384 contacts NAD(+).

Belongs to the aldehyde dehydrogenase family. Homodimer.

The catalysed reaction is betaine aldehyde + NAD(+) + H2O = glycine betaine + NADH + 2 H(+). The protein operates within amine and polyamine biosynthesis; betaine biosynthesis via choline pathway; betaine from betaine aldehyde: step 1/1. With respect to regulation, activity is stimulated by low concentrations of salts and by moderate concentrations of glycine betaine. Highly tolerant to high ionic conditions. In vitro, activity is highly stimulated in the presence of proline. Functionally, involved in the biosynthesis of the osmoprotectant glycine betaine from choline. Catalyzes the oxidation of betaine aldehyde to betaine. Shows specificity for betaine aldehyde as substrate. Can use both NAD(+) and NADP(+), but NAD(+) is strongly preferred. The chain is Betaine aldehyde dehydrogenase from Bacillus subtilis (strain 168).